The chain runs to 140 residues: Peptidyl-prolyl cis-trans isomerase FKBP2 (140 aa).

An N-terminal signal peptide occupies residues 1-22 (MRLSWILTILSICLSALAAATG). In terms of domain architecture, PPIase FKBP-type spans 47-135 (GDVLHMHYTG…VFEVELLKIE (89 aa)). A Prevents secretion from ER motif is present at residues 137 to 140 (RSEL).

Belongs to the FKBP-type PPIase family. FKBP2 subfamily. As to quaternary structure, interacts with ARFGEF1/BIG1 and the C-terminal of EPB41L2.

Its subcellular location is the endoplasmic reticulum membrane. It catalyses the reaction [protein]-peptidylproline (omega=180) = [protein]-peptidylproline (omega=0). Inhibited by both FK506 and rapamycin. Functionally, PPIases accelerate the folding of proteins. It catalyzes the cis-trans isomerization of proline imidic peptide bonds in oligopeptides. The polypeptide is Peptidyl-prolyl cis-trans isomerase FKBP2 (Fkbp2) (Mus musculus (Mouse)).